Consider the following 718-residue polypeptide: NF-kappa-B inhibitor zeta (718 aa).

Over residues 1-17 (MIVDKLLDDSRGGEGLR) the composition is skewed to basic and acidic residues. Disordered stretches follow at residues 1–20 (MIVD…RDAA) and 58–108 (SAPG…RQQR). Low complexity predominate over residues 58–83 (SAPGSPGSDSSDFSSASSVSSCGAVE). Positions 84-97 (SRSRGGARAERQPV) are enriched in basic and acidic residues. The OCA domain occupies 108 to 130 (RGPFQGVRVKNSVKELLLHIRSH). Residues 164 to 179 (KRKGPDSLSDGPACKR) carry the Nuclear localization signal motif. The tract at residues 186-211 (QFLTPPQTPTPGESMEDVHLNEPKQE) is disordered. Basic and acidic residues predominate over residues 201-211 (EDVHLNEPKQE). The required for transcriptional activity stretch occupies residues 321-394 (AYEPNLFDGP…MVGHEMASDS (74 aa)). The segment at 404-718 (MGNPMNTTQL…KSIQQRAPPY (315 aa)) is interaction with NFKB1/p50. ANK repeat units lie at residues 443–472 (DGDT…ALHM), 479–508 (NGQS…QVNT), 512–541 (WGRT…GSNQ), 551–580 (DGLT…HSPE), 582–607 (QELL…AVEA), 612–641 (SGRT…CLSF), and 648–681 (NGNT…DPST).

As to quaternary structure, interacts with NFKB1/p50. Interacts with RELA. Interacts with AKIRIN2. As to expression, expressed at high levels in peripheral blood leukocytes and lung, at moderate levels in liver, placenta, and at low levels in spleen, kidney, skeletal muscle and heart.

It is found in the nucleus. In terms of biological role, involved in regulation of NF-kappa-B transcription factor complexes. Inhibits NF-kappa-B activity without affecting its nuclear translocation upon stimulation. Inhibits DNA-binding of RELA and NFKB1/p50, and of the NF-kappa-B p65-p50 heterodimer and the NF-kappa-B p50-p50 homodimer. Also seems to activate NF-kappa-B-mediated transcription. In vitro, upon association with NFKB1/p50 has transcriptional activation activity and, together with NFKB1/p50 and RELA, is recruited to LCN2 promoters. Promotes transcription of LCN2 and DEFB4. Is recruited to IL-6 promoters and activates IL-6 but decreases TNF-alpha production in response to LPS. Seems to be involved in the induction of inflammatory genes activated through TLR/IL-1 receptor signaling. Involved in the induction of T helper 17 cells (Th17) differentiation upon recognition of antigen by T cell antigen receptor (TCR). This chain is NF-kappa-B inhibitor zeta (NFKBIZ), found in Homo sapiens (Human).